A 268-amino-acid polypeptide reads, in one-letter code: tRNA pseudouridine synthase A (268 aa).

The active-site Nucleophile is Asp-52. Tyr-110 contacts substrate.

The protein belongs to the tRNA pseudouridine synthase TruA family. Homodimer.

It carries out the reaction uridine(38/39/40) in tRNA = pseudouridine(38/39/40) in tRNA. In terms of biological role, formation of pseudouridine at positions 38, 39 and 40 in the anticodon stem and loop of transfer RNAs. This is tRNA pseudouridine synthase A from Prochlorococcus marinus (strain MIT 9515).